Consider the following 306-residue polypeptide: Ribosomal RNA small subunit methyltransferase H (306 aa).

S-adenosyl-L-methionine is bound by residues 37 to 39 (GGH), D56, D102, and Q109.

This sequence belongs to the methyltransferase superfamily. RsmH family.

Its subcellular location is the cytoplasm. The enzyme catalyses cytidine(1402) in 16S rRNA + S-adenosyl-L-methionine = N(4)-methylcytidine(1402) in 16S rRNA + S-adenosyl-L-homocysteine + H(+). Specifically methylates the N4 position of cytidine in position 1402 (C1402) of 16S rRNA. This is Ribosomal RNA small subunit methyltransferase H from Nautilia profundicola (strain ATCC BAA-1463 / DSM 18972 / AmH).